The following is a 568-amino-acid chain: MTTSWSDRLQNAADLPANMDGHALKKYRREAYHRVFVNRSLAMEKIKCFGFDMDYTLAVYKSPEYESLGFDLTVERLVSIGYPQELLNFVYDPTFPTRGLVFDSTYGNLLKVDAYGNILVCAHGFNFMRGPEIREQYPNKFIQRDDTDRFYILNTLFNLPETYLLACLVDFFTNCDRYTSCEMGFKDGDLFMSFRSMFQDVRDAVDWVHYKGSLKEKTVENLPKYVVKDPKLPLLLSRMNEVGKVFLVTNSDYKYTHKIMTYLFDLPHGPKPGSSHRLWQTYFDLILVDARKPLFFGEGTVLRQVDTNTGKLKIGTYTGPLQHGIVYSGGSSDIVCDLLGAKGKDILYIGDHIFGDILKSKKRQGWRTFLVIPELAQELHVWTDKSSLFEELQSLDIFLAELYKHLDSSSNERPDISSIQRRIKKVTHDMDMCYGMMGSLFRSGSRQTLFASQVMRYADLYAASFINLLYYPFSYLFRAAHVLMPHESTVEHTHVDIHETESPMATRNRCSLDFKDSDFKRHQLTRSISEIKPPNLFPQKPQEITHCHDEDDDEEEEEEEEEEEEEEE.

D52 acts as the Nucleophile in catalysis. 2 residues coordinate IMP: D52 and D54. 2 residues coordinate Mg(2+): D52 and D54. D54 (proton donor) is an active-site residue. ATP is bound by residues R144 and N154. Residues R202, D206, K215, T249, N250, S251, and K292 each contribute to the IMP site. Residue D351 coordinates Mg(2+). ATP is bound by residues Q453 and R456. The segment at 528–568 (ISEIKPPNLFPQKPQEITHCHDEDDDEEEEEEEEEEEEEEE) is disordered. The tract at residues 548–568 (HDEDDDEEEEEEEEEEEEEEE) is required for tetramer assembly. Residues 550-568 (EDDDEEEEEEEEEEEEEEE) are compositionally biased toward acidic residues.

Belongs to the 5'(3')-deoxyribonucleotidase family. As to quaternary structure, homotetramer. Mg(2+) is required as a cofactor.

It is found in the cytoplasm. It localises to the cytosol. It catalyses the reaction a ribonucleoside 5'-phosphate + H2O = a ribonucleoside + phosphate. It carries out the reaction a 2'-deoxyribonucleoside + a ribonucleoside 5'-phosphate = a ribonucleoside + a 2'-deoxyribonucleoside 5'-phosphate. The enzyme catalyses IMP + H2O = inosine + phosphate. The catalysed reaction is GMP + H2O = guanosine + phosphate. It catalyses the reaction dIMP + H2O = 2'-deoxyinosine + phosphate. It carries out the reaction dGMP + H2O = 2'-deoxyguanosine + phosphate. The enzyme catalyses XMP + H2O = xanthosine + phosphate. The catalysed reaction is inosine + GMP = guanosine + IMP. It catalyses the reaction dGMP + inosine = 2'-deoxyguanosine + IMP. It carries out the reaction dIMP + inosine = 2'-deoxyinosine + IMP. The enzyme catalyses inosine + UMP = uridine + IMP. The catalysed reaction is inosine + CMP = cytidine + IMP. It catalyses the reaction inosine + AMP = IMP + adenosine. Its activity is regulated as follows. Allosterically activated by various compounds including ATP, 2,3-BPG/2,3-Bisphosphoglyceric acid and Ap4A/P1,P4-bis(5'-adenosyl) tetraphosphate. Binding of an allosteric activator is a prerequisiste to magnesium and substrate binding. Inhibited by inorganic phosphate. Functionally, broad specificity cytosolic 5'-nucleotidase that catalyzes the dephosphorylation of 6-hydroxypurine nucleoside 5'-monophosphates. In addition, possesses a phosphotransferase activity by which it can transfer a phosphate from a donor nucleoside monophosphate to an acceptor nucleoside, preferably inosine, deoxyinosine and guanosine. Has the highest activities for IMP and GMP followed by dIMP, dGMP and XMP. Could also catalyze the transfer of phosphates from pyrimidine monophosphates but with lower efficiency. Through these activities regulates the purine nucleoside/nucleotide pools within the cell. This Xenopus tropicalis (Western clawed frog) protein is Cytosolic purine 5'-nucleotidase (nt5c2).